The chain runs to 414 residues: Putative transporter YoaB (414 aa).

Topologically, residues 1–11 (MLDKIGIPKRL) are cytoplasmic. Residues 12–32 (AWGFLGVVLFMMGDGLEQGWL) form a helical membrane-spanning segment. The Extracellular portion of the chain corresponds to 33 to 47 (SPFLIENGLTVQQSA). A helical membrane pass occupies residues 48 to 68 (SIFSIYGIALAIASWFSGVCL). Topologically, residues 69-75 (EAFGAKR) are cytoplasmic. Residues 76-96 (TMFMGLLFYVIGTAAFIVFGF) traverse the membrane as a helical segment. Residues 97-107 (EQLNLPVMYVT) lie on the Extracellular side of the membrane. A helical transmembrane segment spans residues 108–128 (YFVKGLGYPLFAYSFLTWVIY). Residues 129–136 (RTPQSKLS) are Cytoplasmic-facing. A helical transmembrane segment spans residues 137-157 (TAVGWFWIAYCLGMFVFGAWY). Residues 158–167 (SSYAIKAFGY) are Extracellular-facing. Residues 168–188 (LNTLWSSIFWVCLGAFFALFI) traverse the membrane as a helical segment. Residues 189–219 (NKDRFEKKKRKRSETAEELLKGVTILFTNPR) are Cytoplasmic-facing. A helical transmembrane segment spans residues 220–240 (VLTGGIIRIINSIGTYGFPVF). Topologically, residues 241–255 (LPMHMAQHGISTNVW) are extracellular. The chain crosses the membrane as a helical span at residues 256 to 276 (LQIWGTIFLGNIVFNLIFGIV). Topologically, residues 277–286 (GDKFGWKNTV) are cytoplasmic. A helical transmembrane segment spans residues 287-307 (IWFGGVGCGIFTVLLYYAPVF). Residues 308 to 316 (SGGSLAVVS) are Extracellular-facing. The chain crosses the membrane as a helical span at residues 317 to 337 (VIGFIWGGLLAGYVPIGAIVP). Topologically, residues 338–343 (TVAGKD) are cytoplasmic. A helical membrane pass occupies residues 344-364 (KGAAMSVLNLAAGLSAFVGPA). The Extracellular segment spans residues 365-375 (LAWLFIGLVGA). Residues 376-398 (QGVVWIFAALYLASAVLTKCIHI) form a helical membrane-spanning segment. Topologically, residues 399–414 (PEEKAVKEETSPQYAS) are cytoplasmic.

The protein belongs to the major facilitator superfamily. Sugar transporter (TC 2.A.1.1) family. CsbX subfamily.

The protein resides in the cell membrane. The protein is Putative transporter YoaB (yoaB) of Bacillus subtilis (strain 168).